Consider the following 547-residue polypeptide: Glucose-6-phosphate isomerase (547 aa).

Catalysis depends on Glu-354, which acts as the Proton donor. Residues His-385 and Lys-513 contribute to the active site.

It belongs to the GPI family.

Its subcellular location is the cytoplasm. It carries out the reaction alpha-D-glucose 6-phosphate = beta-D-fructose 6-phosphate. It participates in carbohydrate biosynthesis; gluconeogenesis. Its pathway is carbohydrate degradation; glycolysis; D-glyceraldehyde 3-phosphate and glycerone phosphate from D-glucose: step 2/4. Catalyzes the reversible isomerization of glucose-6-phosphate to fructose-6-phosphate. The chain is Glucose-6-phosphate isomerase from Endomicrobium trichonymphae.